A 193-amino-acid polypeptide reads, in one-letter code: Peptidyl-tRNA hydrolase (193 aa).

A tRNA-binding site is contributed by Tyr-17. Residue His-22 is the Proton acceptor of the active site. Positions 68, 70, and 116 each coordinate tRNA.

This sequence belongs to the PTH family. Monomer.

The protein localises to the cytoplasm. It catalyses the reaction an N-acyl-L-alpha-aminoacyl-tRNA + H2O = an N-acyl-L-amino acid + a tRNA + H(+). Functionally, hydrolyzes ribosome-free peptidyl-tRNAs (with 1 or more amino acids incorporated), which drop off the ribosome during protein synthesis, or as a result of ribosome stalling. Its function is as follows. Catalyzes the release of premature peptidyl moieties from peptidyl-tRNA molecules trapped in stalled 50S ribosomal subunits, and thus maintains levels of free tRNAs and 50S ribosomes. This Chromobacterium violaceum (strain ATCC 12472 / DSM 30191 / JCM 1249 / CCUG 213 / NBRC 12614 / NCIMB 9131 / NCTC 9757 / MK) protein is Peptidyl-tRNA hydrolase.